Here is a 419-residue protein sequence, read N- to C-terminus: Gamma-glutamyl phosphate reductase (419 aa).

The protein belongs to the gamma-glutamyl phosphate reductase family.

It localises to the cytoplasm. It catalyses the reaction L-glutamate 5-semialdehyde + phosphate + NADP(+) = L-glutamyl 5-phosphate + NADPH + H(+). The protein operates within amino-acid biosynthesis; L-proline biosynthesis; L-glutamate 5-semialdehyde from L-glutamate: step 2/2. Functionally, catalyzes the NADPH-dependent reduction of L-glutamate 5-phosphate into L-glutamate 5-semialdehyde and phosphate. The product spontaneously undergoes cyclization to form 1-pyrroline-5-carboxylate. The sequence is that of Gamma-glutamyl phosphate reductase from Marinomonas sp. (strain MWYL1).